We begin with the raw amino-acid sequence, 81 residues long: Small ribosomal subunit protein bS16 (81 aa).

This sequence belongs to the bacterial ribosomal protein bS16 family.

In Clostridium beijerinckii (strain ATCC 51743 / NCIMB 8052) (Clostridium acetobutylicum), this protein is Small ribosomal subunit protein bS16.